A 354-amino-acid chain; its full sequence is DNA polymerase IV (354 aa).

Positions Ile6–Gly187 constitute a UmuC domain. Residues Asp10 and Asp105 each coordinate Mg(2+). Residue Glu106 is part of the active site.

The protein belongs to the DNA polymerase type-Y family. As to quaternary structure, monomer. Requires Mg(2+) as cofactor.

The protein localises to the cytoplasm. It catalyses the reaction DNA(n) + a 2'-deoxyribonucleoside 5'-triphosphate = DNA(n+1) + diphosphate. Poorly processive, error-prone DNA polymerase involved in untargeted mutagenesis. Copies undamaged DNA at stalled replication forks, which arise in vivo from mismatched or misaligned primer ends. These misaligned primers can be extended by PolIV. Exhibits no 3'-5' exonuclease (proofreading) activity. May be involved in translesional synthesis, in conjunction with the beta clamp from PolIII. This Pseudomonas syringae pv. syringae (strain B728a) protein is DNA polymerase IV.